A 289-amino-acid polypeptide reads, in one-letter code: G1/S-specific cyclin-D2 (289 aa).

The Cyclin N-terminal domain occupies 26-151 (VLQNLLTIEE…VVLGKLKWNL (126 aa)). Residues 264-289 (DQRDGSKSEDELDQASTPTDVRDIDL) form a disordered region. Position 271 is a phosphoserine (Ser271). Thr280 is modified (phosphothreonine).

It belongs to the cyclin family. Cyclin D subfamily. Interacts with either CDK4 or CDK6 protein kinase to form a serine/threonine kinase holoenzyme complex. The cyclin subunit imparts substrate specificity to the complex. Post-translationally, phosphorylation at Thr-280 by MAP kinases is required for ubiquitination and degradation by the DCX(AMBRA1) complex. Ubiquitinated by the DCX(AMBRA1) complex during the transition from G1 to S cell phase, leading to its degradation: ubiquitination is dependent on Thr-280 phosphorylation. The DCX(AMBRA1) complex represents the major regulator of CCND2 stability during the G1/S transition. Polyubiquitinated by the SCF(FBXL2) complex, leading to proteasomal degradation.

The protein resides in the nucleus. The protein localises to the cytoplasm. It localises to the nucleus membrane. Functionally, regulatory component of the cyclin D2-CDK4 (DC) complex that phosphorylates and inhibits members of the retinoblastoma (RB) protein family including RB1 and regulates the cell-cycle during G(1)/S transition. Phosphorylation of RB1 allows dissociation of the transcription factor E2F from the RB/E2F complex and the subsequent transcription of E2F target genes which are responsible for the progression through the G(1) phase. Hypophosphorylates RB1 in early G(1) phase. Cyclin D-CDK4 complexes are major integrators of various mitogenenic and antimitogenic signals. This chain is G1/S-specific cyclin-D2, found in Homo sapiens (Human).